The chain runs to 168 residues: S-ribosylhomocysteine lyase (168 aa).

3 residues coordinate Fe cation: His54, His58, and Cys128.

Belongs to the LuxS family. Homodimer. The cofactor is Fe cation.

It catalyses the reaction S-(5-deoxy-D-ribos-5-yl)-L-homocysteine = (S)-4,5-dihydroxypentane-2,3-dione + L-homocysteine. Involved in the synthesis of autoinducer 2 (AI-2) which is secreted by bacteria and is used to communicate both the cell density and the metabolic potential of the environment. The regulation of gene expression in response to changes in cell density is called quorum sensing. Catalyzes the transformation of S-ribosylhomocysteine (RHC) to homocysteine (HC) and 4,5-dihydroxy-2,3-pentadione (DPD). This is S-ribosylhomocysteine lyase from Mannheimia succiniciproducens (strain KCTC 0769BP / MBEL55E).